The following is a 412-amino-acid chain: Argininosuccinate synthase (412 aa).

ATP-binding positions include 10-18 (AYSGGLDTS) and Ala-36. L-citrulline is bound by residues Tyr-87 and Ser-92. Tyr-87 carries the post-translational modification Phosphotyrosine. An N6-acetyllysine modification is found at Lys-112. At Tyr-113 the chain carries Phosphotyrosine. 115 to 123 (SHGATGKGN) serves as a coordination point for ATP. Positions 119, 123, and 124 each coordinate L-aspartate. Position 123 (Asn-123) interacts with L-citrulline. Position 127 (Arg-127) interacts with L-citrulline. 2 positions are modified to N6-acetyllysine; by CLOCK: Lys-165 and Lys-176. Residues Ser-177 and Ser-180 each carry the phosphoserine modification. Residues Ser-180 and Ser-189 each coordinate L-citrulline. Ser-219 carries the post-translational modification Phosphoserine. Residues Glu-270 and Tyr-282 each coordinate L-citrulline.

The protein belongs to the argininosuccinate synthase family. Type 1 subfamily. As to quaternary structure, homotetramer. Interacts with NMRAL1. Interacts with CLOCK; in a circadian manner. Forms tissue-specific complexes with ASL, SLC7A1, HSP90AA1 and nitric oxide synthase NOS1, NOS2 or NOS3; the complex regulates cell-autonomous L-arginine synthesis and citrulline recycling while channeling extracellular L-arginine to nitric oxide synthesis pathway. In terms of processing, acetylated by CLOCK in a circadian manner which negatively regulates its enzyme activity. Deacetylated by histone deacetylases. As to expression, widely expressed.

Its subcellular location is the cytoplasm. The protein resides in the cytosol. It carries out the reaction L-citrulline + L-aspartate + ATP = 2-(N(omega)-L-arginino)succinate + AMP + diphosphate + H(+). Its pathway is amino-acid biosynthesis; L-arginine biosynthesis; L-arginine from L-ornithine and carbamoyl phosphate: step 2/3. It functions in the pathway nitrogen metabolism; urea cycle; (N(omega)-L-arginino)succinate from L-aspartate and L-citrulline: step 1/1. Functionally, one of the enzymes of the urea cycle, the metabolic pathway transforming neurotoxic amonia produced by protein catabolism into inocuous urea in the liver of ureotelic animals. Catalyzes the formation of arginosuccinate from aspartate, citrulline and ATP and together with ASL it is responsible for the biosynthesis of arginine in most body tissues. The chain is Argininosuccinate synthase from Mus musculus (Mouse).